A 512-amino-acid chain; its full sequence is Maturase K (512 aa).

This sequence belongs to the intron maturase 2 family. MatK subfamily.

It is found in the plastid. The protein localises to the chloroplast. Its function is as follows. Usually encoded in the trnK tRNA gene intron. Probably assists in splicing its own and other chloroplast group II introns. This chain is Maturase K, found in Acer campestre (Field maple).